Consider the following 567-residue polypeptide: UPF0313 protein Tpet_0582 (567 aa).

A Radical SAM core domain is found at 288–560; sequence KAIETVKFSI…NKMKENVLFK (273 aa). Residues Cys-303, Cys-307, and Cys-310 each coordinate [4Fe-4S] cluster.

Belongs to the UPF0313 family. Requires [4Fe-4S] cluster as cofactor.

This chain is UPF0313 protein Tpet_0582, found in Thermotoga petrophila (strain ATCC BAA-488 / DSM 13995 / JCM 10881 / RKU-1).